The following is a 311-amino-acid chain: Manganese-dependent ADP-ribose/CDP-alcohol diphosphatase (311 aa).

7 residues coordinate Zn(2+): D17, Q19, D64, N99, H218, H255, and H257.

It belongs to the ADPRibase-Mn family. As to quaternary structure, monomer. It depends on Mg(2+) as a cofactor.

It carries out the reaction CDP-choline + H2O = phosphocholine + CMP + 2 H(+). The catalysed reaction is ADP-D-ribose + H2O = D-ribose 5-phosphate + AMP + 2 H(+). The enzyme catalyses CDP-glycerol + H2O = sn-glycerol 3-phosphate + CMP + 2 H(+). Functionally, hydrolyzes ADP-ribose, IDP-ribose, CDP-glycerol, CDP-choline and CDP-ethanolamine, but not other non-reducing ADP-sugars or CDP-glucose. This Arabidopsis thaliana (Mouse-ear cress) protein is Manganese-dependent ADP-ribose/CDP-alcohol diphosphatase.